A 304-amino-acid polypeptide reads, in one-letter code: UDP-3-O-acyl-N-acetylglucosamine deacetylase (304 aa).

Zn(2+) contacts are provided by histidine 79, histidine 238, and aspartate 242. The active-site Proton donor is histidine 265.

This sequence belongs to the LpxC family. Zn(2+) is required as a cofactor.

The enzyme catalyses a UDP-3-O-[(3R)-3-hydroxyacyl]-N-acetyl-alpha-D-glucosamine + H2O = a UDP-3-O-[(3R)-3-hydroxyacyl]-alpha-D-glucosamine + acetate. The protein operates within glycolipid biosynthesis; lipid IV(A) biosynthesis; lipid IV(A) from (3R)-3-hydroxytetradecanoyl-[acyl-carrier-protein] and UDP-N-acetyl-alpha-D-glucosamine: step 2/6. Its function is as follows. Catalyzes the hydrolysis of UDP-3-O-myristoyl-N-acetylglucosamine to form UDP-3-O-myristoylglucosamine and acetate, the committed step in lipid A biosynthesis. This is UDP-3-O-acyl-N-acetylglucosamine deacetylase from Photobacterium profundum (strain SS9).